A 679-amino-acid polypeptide reads, in one-letter code: MSEKINTKPFILHSDFRPSGDQPQAIEKLAENLTDGLAHQTLLGVTGSGKTFTIANVIAQLNRPAMLLAPNKTLAAQLYAEMKAFFPENAVEYFVSYYDYYQPEAYVPSSDTFIEKDASINDQIEQMRLSATKSFLERRDTIVVASVSAIYGLGDPDSYLQMMLHLQQGAIIDQRQILAKLAELQYTRNDQAFQRGTFRVRGEIIDIFPAESDDRAVRIELFDDEIERLSLFDPLTGSSFGAVPRFTIYPKTHYVTPRERILDAIENIKKELVSRREYFIKEHKLLEEQRISQRTQFDIEMMNELGYCSGIENYSRYLSGRNEGEPPPTLFDYMPSDAILIIDESHVTVPQIGGMYRGDRSRKETLVEYGFRLPSALDNRPLRFEEFERLAPQTIYVSATPGPYELEKSGTEIIDQVVRPTGLLDPLIEIRPVSIQVDDLLSEARQRADKNERVLVTTLTKKMAEDLTDYLDEHGIRVRYLHSDIDTVERVEIIRDLRLGEFDVLVGINLLREGLDIPEVSLVAILDADKEGFLRSERSLIQTIGRAARNLNGKAILYADSITKSMEKAITETNRRREKQIKYNEEHGIVPQALNKKVGELLDIGQGANQKAKANKQRGKMAAEPTALYNAPKNAKEYQQQIKKLEQQMYKFAQDLEFEKAAAIRDQLHQLREQFVFDN.

A Helicase ATP-binding domain is found at 31–414; the sequence is ENLTDGLAHQ…ELEKSGTEII (384 aa). 44–51 is an ATP binding site; it reads GVTGSGKT. Positions 97–120 match the Beta-hairpin motif; it reads YYDYYQPEAYVPSSDTFIEKDASI. Residues 436–589 enclose the Helicase C-terminal domain; the sequence is QVDDLLSEAR…QIKYNEEHGI (154 aa). The 36-residue stretch at 639 to 674 folds into the UVR domain; sequence QQQIKKLEQQMYKFAQDLEFEKAAAIRDQLHQLREQ.

This sequence belongs to the UvrB family. In terms of assembly, forms a heterotetramer with UvrA during the search for lesions. Interacts with UvrC in an incision complex.

Its subcellular location is the cytoplasm. Its function is as follows. The UvrABC repair system catalyzes the recognition and processing of DNA lesions. A damage recognition complex composed of 2 UvrA and 2 UvrB subunits scans DNA for abnormalities. Upon binding of the UvrA(2)B(2) complex to a putative damaged site, the DNA wraps around one UvrB monomer. DNA wrap is dependent on ATP binding by UvrB and probably causes local melting of the DNA helix, facilitating insertion of UvrB beta-hairpin between the DNA strands. Then UvrB probes one DNA strand for the presence of a lesion. If a lesion is found the UvrA subunits dissociate and the UvrB-DNA preincision complex is formed. This complex is subsequently bound by UvrC and the second UvrB is released. If no lesion is found, the DNA wraps around the other UvrB subunit that will check the other stand for damage. The sequence is that of UvrABC system protein B from Haemophilus influenzae (strain 86-028NP).